We begin with the raw amino-acid sequence, 533 residues long: MVLVLYETAAGFALFKVKDEGKMANVEDLCKEFDTPDSARKMVKLKAFEKFDNTSEALEAVAKLLEGAPSKGLRKFLKANCQGETLAVADSKLGNVIKEKLKIDCIHNNAVMELLRGVRSQFTELISGLGDQDLAPMSLGLSHSLARYKLKFSSDKVDTMIIQAIGLLDDLDKELNTYAMRVREWYGWHFPELAKIISDNILYAKSVKLMGNRVNAAKLDFSEILADEIEADLKDAAVISMGTEVSDLDLLHIRELCDQVLSLSEYRAQLYDYLKSRMNTIAPNLTALVGELVGARLISHGGSLLNLSKQPGSTVQILGAEKALFRALKTKHATPKYGLIFHASLVGQAAPKHKGKISRSLAAKTVLAIRVDALGDSQDNTMGLENRAKLEARLRNLEGKDLGRLSGSSKGKPKIEVYNKDKKMGSGGLITPAKTYNTAADSLLGETSAKSEEPSKKKDKKKKKKVEEEKPEEEEPSEKKKKKKAEAETEAVVEVAKEEKKKNKKKRKHEEEETTETPAKKKDKKEKKKKSKD.

A Nop domain is found at 281 to 399 (IAPNLTALVG…LEARLRNLEG (119 aa)). Disordered stretches follow at residues 401 to 433 (DLGR…ITPA) and 445 to 533 (GETS…KSKD). Over residues 413-424 (PKIEVYNKDKKM) the composition is skewed to basic and acidic residues. The segment covering 521–533 (KKDKKEKKKKSKD) has biased composition (basic residues).

It belongs to the NOP5/NOP56 family.

It is found in the nucleus. The protein localises to the nucleolus. In terms of biological role, required for 60S ribosomal subunit biogenesis. The polypeptide is Probable nucleolar protein 5-2 (NOP5-2) (Arabidopsis thaliana (Mouse-ear cress)).